Here is a 2227-residue protein sequence, read N- to C-terminus: Genome polyprotein (2227 aa).

Short sequence motifs ((L)YPX(n)L motif) lie at residues 167–171 (YPHGL) and 200–205 (YPVWEL). The interval 766–836 (MMSRIAAGDL…PRKMKGLFSQ (71 aa)) is involved in P1-2A pentamerization. A helical membrane pass occupies residues 1011–1031 (TVEIINTVLCFVKSGILLYVI). The interval 1043–1070 (IGLLRVMNYADIGCSVISCGKVFSKMLE) is membrane-penetrating ability. Residues 1127 to 1152 (KKKDILNILKDNQQKIEKAIEEADNF) are a coiled coil. One can recognise an SF3 helicase domain in the interval 1204-1366 (HQKLKNLGSI…SFFKNPHNDM (163 aa)). 1230–1237 (GKRGGGKS) lines the ATP pocket. A helical membrane pass occupies residues 1462 to 1482 (WVAVGAAVGILGVLVGGWFVY). Tyrosine 1499 carries the O-(5'-phospho-RNA)-tyrosine modification. A Peptidase C3 domain is found at 1514–1728 (DPVESQSTLE…VAKLVTQEMF (215 aa)). Catalysis depends on for protease 3C activity residues histidine 1563, aspartate 1603, and cysteine 1691. In terms of domain architecture, RdRp catalytic spans 1976 to 2097 (DVGLDLDFSA…VFSRDVQIDN (122 aa)).

Belongs to the picornaviridae polyprotein family. Homodimer. Homomultimer; probably interacts with membranes in a multimeric form. Seems to assemble into amyloid-like fibers. In terms of assembly, homodimer. Monomer. Interacts with protein 3CD. As to quaternary structure, interacts with host ACBD3. Interacts with protein 3AB. In terms of assembly, interacts with human MAVS. As to quaternary structure, homodimer; disulfide-linked. Homopentamer. Homooligomer. In terms of assembly, interacts with capsid protein VP2. Interacts with capsid protein VP3. As to quaternary structure, interacts with capsid protein VP1. Interacts with capsid protein VP3. Interacts with capsid protein VP1. Interacts with capsid protein VP2. Post-translationally, specific enzymatic cleavages by viral protease in vivo yield a variety of precursors and mature proteins. Polyprotein processing intermediates are produced, such as P1-2A which is a functional precursor of the structural proteins, VP0 which is a VP4-VP2 precursor, VP1-2A precursor, 3ABC precursor which is a stable and catalytically active precursor of 3A, 3B and 3C proteins, 3AB and 3CD precursors. The assembly signal 2A is removed from VP1-2A by a host protease, possibly host Cathepsin L. This cleavage occurs over a region of 3 amino-acids probably generating VP1 proteins with heterogeneous C-termini. In terms of processing, during virion maturation, immature virions are rendered infectious following cleavage of VP0 into VP4 and VP2. This maturation seems to be an autocatalytic event triggered by the presence of RNA in the capsid and is followed by a conformational change of the particle. The assembly signal 2A is removed from VP1-2A by a host protease, possibly host Cathepsin L in naked virions. This cleavage does not occur in enveloped virions. This cleavage occurs over a region of 3 amino-acids probably generating VP1 proteins with heterogeneous C-termini. Post-translationally, VPg is uridylylated prior to priming replication into VPg-pUpU. In terms of processing, unlike other picornaviruses, does not seem to be myristoylated.

The protein localises to the virion. It is found in the host endosome. Its subcellular location is the host multivesicular body. It localises to the host membrane. The protein resides in the host mitochondrion outer membrane. The protein localises to the host cytoplasm. It is found in the host cytoplasmic vesicle membrane. The enzyme catalyses RNA(n) + a ribonucleoside 5'-triphosphate = RNA(n+1) + diphosphate. It catalyses the reaction a ribonucleoside 5'-triphosphate + H2O = a ribonucleoside 5'-diphosphate + phosphate + H(+). It carries out the reaction Selective cleavage of Gln-|-Gly bond in the poliovirus polyprotein. In other picornavirus reactions Glu may be substituted for Gln, and Ser or Thr for Gly.. In terms of biological role, capsid proteins VP1, VP2, and VP3 form a closed capsid enclosing the viral positive strand RNA genome. All these proteins contain a beta-sheet structure called beta-barrel jelly roll. Together they form an icosahedral capsid (T=3) composed of 60 copies of each VP1, VP2, and VP3, with a diameter of approximately 300 Angstroms. VP1 is situated at the 12 fivefold axes, whereas VP2 and VP3 are located at the quasi-sixfold axes. The naked capsid interacts with the host receptor HAVCR1 to provide virion attachment to and probably entry into the target cell. Functionally, VP0 precursor is a component of the immature procapsids. Its function is as follows. Plays a role in the assembly of the 12 pentamers into an icosahedral structure. Has not been detected in mature virions, supposedly owing to its small size. Precursor component of immature procapsids that corresponds to an extended form of the structural protein VP1. After maturation, possibly by the host Cathepsin L, the assembly signal 2A is cleaved to give rise to the mature VP1 protein. In terms of biological role, functions as a viroporin. Affects membrane integrity and causes an increase in membrane permeability. Involved in host intracellular membrane rearrangements probably to give rise to the viral factories. Does not disrupt calcium homeostasis or glycoprotein trafficking. Antagonizes the innate immune response of the host by suppressing IFN-beta synthesis, which it achieves by interfering with the RIG-I/IFIH1 pathway. Functionally, affects membrane integrity and causes an increase in membrane permeability. Its function is as follows. Associates with and induces structural rearrangements of intracellular membranes. Displays RNA-binding activity. The precursor 3ABC is targeted to the mitochondrial membrane where protease 3C activity cleaves and inhibits the host antiviral protein MAVS, thereby disrupting activation of IRF3 through the IFIH1/MDA5 pathway. In vivo, the protease activity of 3ABC precursor is more efficient in cleaving the 2BC precursor than that of protein 3C. The 3ABC precursor may therefore play a role in the proteolytic processing of the polyprotein. Possible viroporin. In terms of biological role, interacts with the 3CD precursor and with RNA structures found at both the 5'- and 3'-termini of the viral genome. Since the 3AB precursor contains the hydrophobic domain 3A, it probably anchors the whole viral replicase complex to intracellular membranes on which viral RNA synthesis occurs. Functionally, may serve as membrane anchor to the 3AB and 3ABC precursors via its hydrophobic domain. May interact with RNA. Its function is as follows. Acts as a primer for viral RNA replication and remains covalently bound to viral genomic RNA. VPg is uridylylated prior to priming replication into VPg-pUpU. The VPg-pUpU is then used as primer on the genomic RNA poly(A) by the RNA-dependent RNA polymerase to replicate the viral genome. Cysteine protease that generates mature viral proteins from the precursor polyprotein. In addition to its proteolytic activity, it binds to viral RNA, and thus influences viral genome replication. RNA and substrate bind cooperatively to the protease. Cleaves IKBKG/NEMO to impair innate immune signaling. Cleaves host PABPC1 which may participate in the switch of viral translation to RNA synthesis. In terms of biological role, interacts with the 3AB precursor and with RNA structures found at both the 5'- and 3'-termini of the viral genome. Disrupts TLR3 signaling by degrading the host adapter protein TICAM1/TRIF. Functionally, RNA-directed RNA polymerase 3D-POL replicates genomic and antigenomic RNA by recognizing replications specific signals. The chain is Genome polyprotein from Human hepatitis A virus genotype IA (isolate H2) (HHAV).